The chain runs to 132 residues: Ribosome-binding factor A (132 aa).

This sequence belongs to the RbfA family. Monomer. Binds 30S ribosomal subunits, but not 50S ribosomal subunits or 70S ribosomes.

It localises to the cytoplasm. Functionally, one of several proteins that assist in the late maturation steps of the functional core of the 30S ribosomal subunit. Associates with free 30S ribosomal subunits (but not with 30S subunits that are part of 70S ribosomes or polysomes). Required for efficient processing of 16S rRNA. May interact with the 5'-terminal helix region of 16S rRNA. In Rhizorhabdus wittichii (strain DSM 6014 / CCUG 31198 / JCM 15750 / NBRC 105917 / EY 4224 / RW1) (Sphingomonas wittichii), this protein is Ribosome-binding factor A.